The sequence spans 278 residues: Nucleotide-binding protein Tlet_0523 (278 aa).

9–16 (GLSGAGKS) is an ATP binding site. Position 58–61 (58–61 (DIRS)) interacts with GTP.

The protein belongs to the RapZ-like family.

In terms of biological role, displays ATPase and GTPase activities. In Pseudothermotoga lettingae (strain ATCC BAA-301 / DSM 14385 / NBRC 107922 / TMO) (Thermotoga lettingae), this protein is Nucleotide-binding protein Tlet_0523.